A 415-amino-acid chain; its full sequence is Corticotropin-releasing factor receptor 1 (415 aa).

Positions 1–23 (MGRRPQLRLVKALLLLGLNPVST) are cleaved as a signal peptide. Residues 24-111 (SLQDQRCENL…CQEILNEEKK (88 aa)) are Extracellular-facing. Cystine bridges form between cysteine 30-cysteine 54, cysteine 44-cysteine 87, and cysteine 68-cysteine 102. 5 N-linked (GlcNAc...) asparagine glycosylation sites follow: asparagine 38, asparagine 45, asparagine 78, asparagine 90, and asparagine 98. The tract at residues 99 to 108 (YSECQEILNE) is important for peptide agonist binding. A helical membrane pass occupies residues 112 to 142 (SKVHYHVAVIINYLGHCISLVALLVAFVLFL). Over 143 to 149 (RLRSIRC) the chain is Cytoplasmic. Residues 150-174 (LRNIIHWNLISAFILRNATWFVVQL) traverse the membrane as a helical segment. The Extracellular segment spans residues 175–189 (TVSPEVHQSNVAWCR). An intrachain disulfide couples cysteine 188 to cysteine 258. The helical transmembrane segment at 190–218 (LVTAAYNYFHVTNFFWMFGEGCYLHTAIV) threads the bilayer. Residues 219–225 (LTYSTDR) lie on the Cytoplasmic side of the membrane. Residues 226 to 253 (LRKWMFVCIGWGVPFPIIVAWAIGKLHY) traverse the membrane as a helical segment. Residues 254-269 (DNEKCWFGKRPGVYTD) are Extracellular-facing. Residues 270–295 (YIYQGPMILVLLINFIFLFNIVRILM) form a helical membrane-spanning segment. Residues 280 to 290 (LLINFIFLFNI) are important for antagonist binding. Topologically, residues 296–306 (TKLRASTTSET) are cytoplasmic. Position 301 is a phosphoserine; by PKA (serine 301). Residues 307 to 331 (IQYRKAVKATLVLLPLLGITYMLFF) form a helical membrane-spanning segment. At 332 to 338 (VNPGEDE) the chain is on the extracellular side. The helical transmembrane segment at 339–368 (VSRVVFIYFNSFLESFQGFFVSVFYCFLNS) threads the bilayer. Residues 369–415 (EVRSAIRKRWRRWQDKHSIRARVARAMSIPTSPTRVSFHSIKQSTAV) are Cytoplasmic-facing.

It belongs to the G-protein coupled receptor 2 family. Interacts (via N-terminal extracellular domain) with CRH and UCN. Interacts with DLG1; this inhibits endocytosis of CRHR1 after agonist binding. Heterodimer; heterodimerizes with GPER1. Post-translationally, C-terminal Ser or Thr residues may be phosphorylated. Phosphorylation at Ser-301 by PKA prevents maximal coupling to Gq-protein, and thereby negatively regulates downstream signaling. As to expression, detected in brain, especially in cerebellum. Detected in pituitary gland, and at lower levels in the olfactory bulb.

The protein localises to the cell membrane. It is found in the endosome. In terms of biological role, G-protein coupled receptor for CRH (corticotropin-releasing factor) and UCN (urocortin). Has high affinity for CRH and UCN. Ligand binding causes a conformation change that triggers signaling via guanine nucleotide-binding proteins (G proteins) and down-stream effectors, such as adenylate cyclase. Promotes the activation of adenylate cyclase, leading to increased intracellular cAMP levels. Inhibits the activity of the calcium channel CACNA1H. Required for normal embryonic development of the adrenal gland and for normal hormonal responses to stress. Plays a role in the response to anxiogenic stimuli. This is Corticotropin-releasing factor receptor 1 (Crhr1) from Rattus norvegicus (Rat).